A 232-amino-acid chain; its full sequence is uncharacterized protein (232 aa).

Helical transmembrane passes span L69–F91, F104–L126, F139–L161, I166–S188, and F200–I219.

It is found in the cell membrane. This is an uncharacterized protein from Bacillus subtilis (strain 168).